A 532-amino-acid polypeptide reads, in one-letter code: 2,3-bisphosphoglycerate-independent phosphoglycerate mutase (532 aa).

Mn(2+) contacts are provided by Asp-13 and Ser-63. Catalysis depends on Ser-63, which acts as the Phosphoserine intermediate. Substrate-binding positions include His-124, 154-155, Arg-187, Arg-193, 262-265, and Lys-343; these read RD and RPDR. Mn(2+) is bound by residues Asp-421, His-425, Asp-463, His-464, and His-481.

The protein belongs to the BPG-independent phosphoglycerate mutase family. As to quaternary structure, monomer. It depends on Mn(2+) as a cofactor.

It catalyses the reaction (2R)-2-phosphoglycerate = (2R)-3-phosphoglycerate. The protein operates within carbohydrate degradation; glycolysis; pyruvate from D-glyceraldehyde 3-phosphate: step 3/5. Functionally, catalyzes the interconversion of 2-phosphoglycerate and 3-phosphoglycerate. This is 2,3-bisphosphoglycerate-independent phosphoglycerate mutase from Mesoplasma florum (strain ATCC 33453 / NBRC 100688 / NCTC 11704 / L1) (Acholeplasma florum).